Here is a 396-residue protein sequence, read N- to C-terminus: Orotidine 5'-phosphate decarboxylase (396 aa).

Residues D46, 68–70 (KTH), 103–112 (DRKFVDIGST), Y346, and R365 contribute to the substrate site. K105 serves as the catalytic Proton donor.

This sequence belongs to the OMP decarboxylase family.

It carries out the reaction orotidine 5'-phosphate + H(+) = UMP + CO2. It participates in pyrimidine metabolism; UMP biosynthesis via de novo pathway; UMP from orotate: step 2/2. The polypeptide is Orotidine 5'-phosphate decarboxylase (URA3) (Sordaria macrospora (strain ATCC MYA-333 / DSM 997 / K(L3346) / K-hell)).